A 432-amino-acid polypeptide reads, in one-letter code: Glutamyl-tRNA reductase (432 aa).

Residues 49-52 (TCNR), Ser107, 112-114 (ETQ), and Gln118 contribute to the substrate site. Catalysis depends on Cys50, which acts as the Nucleophile. 186–191 (GAGEMG) provides a ligand contact to NADP(+).

Belongs to the glutamyl-tRNA reductase family. As to quaternary structure, homodimer.

It catalyses the reaction (S)-4-amino-5-oxopentanoate + tRNA(Glu) + NADP(+) = L-glutamyl-tRNA(Glu) + NADPH + H(+). It participates in porphyrin-containing compound metabolism; protoporphyrin-IX biosynthesis; 5-aminolevulinate from L-glutamyl-tRNA(Glu): step 1/2. Catalyzes the NADPH-dependent reduction of glutamyl-tRNA(Glu) to glutamate 1-semialdehyde (GSA). The sequence is that of Glutamyl-tRNA reductase from Campylobacter jejuni (strain RM1221).